A 1070-amino-acid chain; its full sequence is DNA-directed RNA polymerase subunit beta (1070 aa).

This sequence belongs to the RNA polymerase beta chain family. In terms of assembly, in plastids the minimal PEP RNA polymerase catalytic core is composed of four subunits: alpha, beta, beta', and beta''. When a (nuclear-encoded) sigma factor is associated with the core the holoenzyme is formed, which can initiate transcription.

The protein resides in the plastid. The protein localises to the chloroplast. It catalyses the reaction RNA(n) + a ribonucleoside 5'-triphosphate = RNA(n+1) + diphosphate. In terms of biological role, DNA-dependent RNA polymerase catalyzes the transcription of DNA into RNA using the four ribonucleoside triphosphates as substrates. The protein is DNA-directed RNA polymerase subunit beta of Chloranthus spicatus (Chulantree).